Reading from the N-terminus, the 304-residue chain is tRNA (guanine(9)-N1)-methyltransferase (304 aa).

2 stretches are compositionally biased toward basic and acidic residues: residues 1 to 26 and 42 to 72; these read MENK…KNET and RQQE…KRKI. The segment at 1-72 is disordered; sequence MENKDALDIG…LRKEERKRKI (72 aa). In terms of domain architecture, SAM-dependent MTase TRM10-type spans 81–276; it reads QKKRIRLGKV…EVIPKRKGIL (196 aa). Residues Leu183, Gly203, 207 to 211, Cys215, Leu229, and 241 to 243 contribute to the S-adenosyl-L-methionine site; these read DKNRY and KIL. Asp207 acts as the Proton acceptor in catalysis. The tract at residues 282-304 is disordered; it reads SFDVSEDTRSQSNQSDSELEKEN. Ser296 is subject to Phosphoserine.

It belongs to the class IV-like SAM-binding methyltransferase superfamily. TRM10 family. As to quaternary structure, monomer.

It is found in the cytoplasm. The protein resides in the nucleus. It carries out the reaction guanosine(9) in tRNA + S-adenosyl-L-methionine = N(1)-methylguanosine(9) in tRNA + S-adenosyl-L-homocysteine + H(+). S-adenosyl-L-methionine-dependent guanine N(1)-methyltransferase that catalyzes the formation of N(1)-methylguanine at position 9 (m1G9) in cytoplasmic tRNA. This chain is tRNA (guanine(9)-N1)-methyltransferase, found in Schizosaccharomyces pombe (strain 972 / ATCC 24843) (Fission yeast).